A 178-amino-acid polypeptide reads, in one-letter code: Crossover junction endodeoxyribonuclease RuvC (178 aa).

Active-site residues include aspartate 21, glutamate 81, and histidine 154. Residues aspartate 21, glutamate 81, and histidine 154 each coordinate Mg(2+).

It belongs to the RuvC family. As to quaternary structure, homodimer which binds Holliday junction (HJ) DNA. The HJ becomes 2-fold symmetrical on binding to RuvC with unstacked arms; it has a different conformation from HJ DNA in complex with RuvA. In the full resolvosome a probable DNA-RuvA(4)-RuvB(12)-RuvC(2) complex forms which resolves the HJ. Requires Mg(2+) as cofactor.

The protein resides in the cytoplasm. It carries out the reaction Endonucleolytic cleavage at a junction such as a reciprocal single-stranded crossover between two homologous DNA duplexes (Holliday junction).. Its function is as follows. The RuvA-RuvB-RuvC complex processes Holliday junction (HJ) DNA during genetic recombination and DNA repair. Endonuclease that resolves HJ intermediates. Cleaves cruciform DNA by making single-stranded nicks across the HJ at symmetrical positions within the homologous arms, yielding a 5'-phosphate and a 3'-hydroxyl group; requires a central core of homology in the junction. The consensus cleavage sequence is 5'-(A/T)TT(C/G)-3'. Cleavage occurs on the 3'-side of the TT dinucleotide at the point of strand exchange. HJ branch migration catalyzed by RuvA-RuvB allows RuvC to scan DNA until it finds its consensus sequence, where it cleaves and resolves the cruciform DNA. This Treponema denticola (strain ATCC 35405 / DSM 14222 / CIP 103919 / JCM 8153 / KCTC 15104) protein is Crossover junction endodeoxyribonuclease RuvC.